The following is a 405-amino-acid chain: L-carnitine CoA-transferase (405 aa).

2 residues coordinate CoA: lysine 97 and arginine 104. Catalysis depends on aspartate 169, which acts as the Nucleophile.

It belongs to the CoA-transferase III family. CaiB subfamily. Homodimer.

The protein localises to the cytoplasm. It catalyses the reaction crotonobetainyl-CoA + (R)-carnitine = crotonobetaine + (R)-carnitinyl-CoA. It carries out the reaction 4-(trimethylamino)butanoyl-CoA + (R)-carnitine = (R)-carnitinyl-CoA + 4-(trimethylamino)butanoate. Its pathway is amine and polyamine metabolism; carnitine metabolism. Functionally, catalyzes the reversible transfer of the CoA moiety from gamma-butyrobetainyl-CoA to L-carnitine to generate L-carnitinyl-CoA and gamma-butyrobetaine. Is also able to catalyze the reversible transfer of the CoA moiety from gamma-butyrobetainyl-CoA or L-carnitinyl-CoA to crotonobetaine to generate crotonobetainyl-CoA. The sequence is that of L-carnitine CoA-transferase from Escherichia fergusonii (strain ATCC 35469 / DSM 13698 / CCUG 18766 / IAM 14443 / JCM 21226 / LMG 7866 / NBRC 102419 / NCTC 12128 / CDC 0568-73).